Reading from the N-terminus, the 491-residue chain is UDP-N-acetylmuramate--L-alanine ligase (491 aa).

G126–T132 lines the ATP pocket.

Belongs to the MurCDEF family.

The protein resides in the cytoplasm. It catalyses the reaction UDP-N-acetyl-alpha-D-muramate + L-alanine + ATP = UDP-N-acetyl-alpha-D-muramoyl-L-alanine + ADP + phosphate + H(+). The protein operates within cell wall biogenesis; peptidoglycan biosynthesis. Cell wall formation. This is UDP-N-acetylmuramate--L-alanine ligase from Escherichia coli (strain SE11).